The sequence spans 1369 residues: Phosphoribosylformylglycinamidine synthase (1369 aa).

Disordered stretches follow at residues 321–352 (HPTA…AKPK) and 373–400 (ENAR…KPDR). Residue 330–341 (GASTGAGGEIRD) participates in ATP binding. ATP is bound at residue Ala-721. Residues Asp-722, Glu-761, Asn-765, and Asp-934 each coordinate Mg(2+). Residue Ser-936 coordinates ATP. Positions 1116 to 1369 (MAILREQGVN…MFRNARKQMG (254 aa)) constitute a Glutamine amidotransferase type-1 domain. Residue Cys-1209 is the Nucleophile of the active site. Catalysis depends on residues His-1330 and Glu-1332.

This sequence in the N-terminal section; belongs to the FGAMS family. Monomer.

It localises to the cytoplasm. The catalysed reaction is N(2)-formyl-N(1)-(5-phospho-beta-D-ribosyl)glycinamide + L-glutamine + ATP + H2O = 2-formamido-N(1)-(5-O-phospho-beta-D-ribosyl)acetamidine + L-glutamate + ADP + phosphate + H(+). The protein operates within purine metabolism; IMP biosynthesis via de novo pathway; 5-amino-1-(5-phospho-D-ribosyl)imidazole from N(2)-formyl-N(1)-(5-phospho-D-ribosyl)glycinamide: step 1/2. Functionally, phosphoribosylformylglycinamidine synthase involved in the purines biosynthetic pathway. Catalyzes the ATP-dependent conversion of formylglycinamide ribonucleotide (FGAR) and glutamine to yield formylglycinamidine ribonucleotide (FGAM) and glutamate. The polypeptide is Phosphoribosylformylglycinamidine synthase (Ralstonia nicotianae (strain ATCC BAA-1114 / GMI1000) (Ralstonia solanacearum)).